Consider the following 264-residue polypeptide: Segregation and condensation protein A (264 aa).

This sequence belongs to the ScpA family. As to quaternary structure, component of a cohesin-like complex composed of ScpA, ScpB and the Smc homodimer, in which ScpA and ScpB bind to the head domain of Smc. The presence of the three proteins is required for the association of the complex with DNA.

The protein localises to the cytoplasm. In terms of biological role, participates in chromosomal partition during cell division. May act via the formation of a condensin-like complex containing Smc and ScpB that pull DNA away from mid-cell into both cell halves. The polypeptide is Segregation and condensation protein A (Enterococcus faecalis (strain ATCC 700802 / V583)).